The sequence spans 280 residues: uncharacterized protein (280 aa).

4 stretches are compositionally biased toward basic and acidic residues: residues 110-122, 167-177, 223-261, and 269-280; these read EKQAHDDHPERLQ, ATGEERAECGR, ARQHDQRGDRRKGEGDRQKHGDRRGRPDARKNADQRPQQ, and DVDRSKSCLEAE. 3 disordered regions span residues 110 to 137, 151 to 177, and 219 to 280; these read EKQAHDDHPERLQNRSVRQRNGDKKTEH, HRGERRSGNCQQQGRHATGEERAECGR, and TIID…LEAE.

This is an uncharacterized protein from Agrobacterium vitis (Rhizobium vitis).